Consider the following 315-residue polypeptide: Cyclin-dependent kinase B2-2 (315 aa).

The region spanning 16 to 306 (FEKLEKVGEG…AKKAMEHPYF (291 aa)) is the Protein kinase domain. ATP contacts are provided by residues 22-30 (VGEGTYGKV) and Lys-45. Tyr-27 is subject to Phosphotyrosine. Asp-147 serves as the catalytic Proton acceptor. The residue at position 181 (Thr-181) is a Phosphothreonine.

The protein belongs to the protein kinase superfamily. CMGC Ser/Thr protein kinase family. CDC2/CDKX subfamily. Expressed in flowers.

It catalyses the reaction L-seryl-[protein] + ATP = O-phospho-L-seryl-[protein] + ADP + H(+). The catalysed reaction is L-threonyl-[protein] + ATP = O-phospho-L-threonyl-[protein] + ADP + H(+). It carries out the reaction [DNA-directed RNA polymerase] + ATP = phospho-[DNA-directed RNA polymerase] + ADP + H(+). In Arabidopsis thaliana (Mouse-ear cress), this protein is Cyclin-dependent kinase B2-2 (CDKB2-2).